A 182-amino-acid chain; its full sequence is Isopentenyl-diphosphate Delta-isomerase (182 aa).

Mn(2+) is bound by residues histidine 25 and histidine 32. Residues 30–164 form the Nudix hydrolase domain; that stretch reads LLHLAFSSWL…PWAFSPWMVM (135 aa). Residue cysteine 67 is part of the active site. Histidine 69 contributes to the Mn(2+) binding site. A Mg(2+)-binding site is contributed by glutamate 87. Positions 114 and 116 each coordinate Mn(2+). Glutamate 116 is an active-site residue.

This sequence belongs to the IPP isomerase type 1 family. Homodimer. It depends on Mg(2+) as a cofactor. The cofactor is Mn(2+).

It is found in the cytoplasm. The catalysed reaction is isopentenyl diphosphate = dimethylallyl diphosphate. It functions in the pathway isoprenoid biosynthesis; dimethylallyl diphosphate biosynthesis; dimethylallyl diphosphate from isopentenyl diphosphate: step 1/1. In terms of biological role, catalyzes the 1,3-allylic rearrangement of the homoallylic substrate isopentenyl (IPP) to its highly electrophilic allylic isomer, dimethylallyl diphosphate (DMAPP). This Escherichia coli O9:H4 (strain HS) protein is Isopentenyl-diphosphate Delta-isomerase.